Consider the following 600-residue polypeptide: Adenine deaminase 2 (600 aa).

Belongs to the metallo-dependent hydrolases superfamily. Adenine deaminase family. Mn(2+) is required as a cofactor.

It carries out the reaction adenine + H2O + H(+) = hypoxanthine + NH4(+). In Bradyrhizobium sp. (strain ORS 278), this protein is Adenine deaminase 2.